The following is a 261-amino-acid chain: MSAKQQLRILVPVKRVVDFQIKPRVNKTLTGIETSGIKFSINPFDDIAVEEAIRIKEKNKSLVESTHAVSIGSAKAQDILRNCLAKGIDTCSLIDSVGKENIEPLAIAKILKAVVEKKGSNLVLMGKQAIDDDCNNTGQMLAGLLNWPQATNAAKVEFLDNGRVQVTREIDDGEEVIEASLPMVITTDLRLNTPRYVGLPKLMKAKKKPIEKLDIAKDFPEINIEPQLKIVSMEEPKTKSPGVKLNSVDELIEKLKEVKAI.

Position 2 is an N-acetylserine (Ser2).

The protein belongs to the ETF beta-subunit/FixA family. As to quaternary structure, heterodimer of an alpha and a beta subunit. Interacts with YFH1. FAD serves as cofactor. The cofactor is AMP.

Its subcellular location is the mitochondrion matrix. In terms of biological role, the electron transfer flavoprotein serves as a specific electron acceptor for several dehydrogenases, including five acyl-CoA dehydrogenases, glutaryl-CoA and sarcosine dehydrogenase. It transfers the electrons to the main mitochondrial respiratory chain via ETF-ubiquinone oxidoreductase (ETF dehydrogenase). This Saccharomyces cerevisiae (strain ATCC 204508 / S288c) (Baker's yeast) protein is Probable electron transfer flavoprotein subunit beta (CIR1).